We begin with the raw amino-acid sequence, 902 residues long: Protein translocase subunit SecA (902 aa).

Residues glutamine 87, glycine 105–threonine 109, and aspartate 512 each bind ATP. Positions aspartate 847 to alanine 902 are disordered. Zn(2+)-binding residues include cysteine 885, cysteine 887, cysteine 896, and histidine 897. Positions lysine 891–alanine 902 are enriched in basic residues.

It belongs to the SecA family. In terms of assembly, monomer and homodimer. Part of the essential Sec protein translocation apparatus which comprises SecA, SecYEG and auxiliary proteins SecDF-YajC and YidC. The cofactor is Zn(2+).

The protein resides in the cell inner membrane. It localises to the cytoplasm. The catalysed reaction is ATP + H2O + cellular proteinSide 1 = ADP + phosphate + cellular proteinSide 2.. In terms of biological role, part of the Sec protein translocase complex. Interacts with the SecYEG preprotein conducting channel. Has a central role in coupling the hydrolysis of ATP to the transfer of proteins into and across the cell membrane, serving both as a receptor for the preprotein-SecB complex and as an ATP-driven molecular motor driving the stepwise translocation of polypeptide chains across the membrane. In Edwardsiella ictaluri (strain 93-146), this protein is Protein translocase subunit SecA.